The sequence spans 90 residues: MGISPWTLLIVLLIVLLVFGTKKLRNMGTDMGGAIKGFKDAMKEGEEGAKEGEKSEPSKLEQPPEEEKESGEGHTIEGERSEQPRDRHSS.

Residues 1 to 21 form a helical membrane-spanning segment; that stretch reads MGISPWTLLIVLLIVLLVFGT. Composition is skewed to basic and acidic residues over residues 42–59 and 70–90; these read MKEGEEGAKEGEKSEPSK and SGEGHTIEGERSEQPRDRHSS. The segment at 42–90 is disordered; that stretch reads MKEGEEGAKEGEKSEPSKLEQPPEEEKESGEGHTIEGERSEQPRDRHSS.

Belongs to the TatA/E family. In terms of assembly, the Tat system comprises two distinct complexes: a TatABC complex, containing multiple copies of TatA, TatB and TatC subunits, and a separate TatA complex, containing only TatA subunits. Substrates initially bind to the TatABC complex, which probably triggers association of the separate TatA complex to form the active translocon.

It is found in the cell inner membrane. Its function is as follows. Part of the twin-arginine translocation (Tat) system that transports large folded proteins containing a characteristic twin-arginine motif in their signal peptide across membranes. TatA could form the protein-conducting channel of the Tat system. The polypeptide is Sec-independent protein translocase protein TatA (Alkalilimnicola ehrlichii (strain ATCC BAA-1101 / DSM 17681 / MLHE-1)).